We begin with the raw amino-acid sequence, 1038 residues long: Kinesin-like protein KIN-5B (1038 aa).

A disordered region spans residues 1-63; the sequence is MAQTPNPSRR…GGGGGGGSEM (63 aa). Over residues 24 to 34 the composition is skewed to basic and acidic residues; it reads RPERRQLELRW. A compositionally biased stretch (gly residues) spans 49 to 61; that stretch reads GLTGGGGGGGGGS. The Kinesin motor domain occupies 69–410; the sequence is NVQVVLRCRP…LDYAYRAKSI (342 aa). 154 to 161 serves as a coordination point for ATP; it reads GQTGTGKT. A coiled-coil region spans residues 453–502; it reads QERFALEEAEKKTMRDKIEYLETQNKELKMNIESCKKEYLDLEEAHSRAN. The disordered stretch occupies residues 1013-1038; sequence DKGKRYVDQGTRTPRSPLMPVNHYNK.

Belongs to the TRAFAC class myosin-kinesin ATPase superfamily. Kinesin family. KIN-5/BimC subfamily.

The protein localises to the cytoplasm. The protein resides in the cytoskeleton. It is found in the spindle. Functionally, responsible for microtubule translocation. May be important for the organization of phragmoplast-specific arrays of microtubules. Plays an essential role in stabilizing the mitotic spindle. Required during mitotic cytokinesis. This chain is Kinesin-like protein KIN-5B, found in Oryza sativa subsp. japonica (Rice).